The sequence spans 196 residues: Orotate phosphoribosyltransferase (196 aa).

5-phospho-alpha-D-ribose 1-diphosphate is bound at residue 117-125 (EDVVTTGLS). Positions 121 and 149 each coordinate orotate.

This sequence belongs to the purine/pyrimidine phosphoribosyltransferase family. PyrE subfamily. As to quaternary structure, homodimer. Mg(2+) serves as cofactor.

It carries out the reaction orotidine 5'-phosphate + diphosphate = orotate + 5-phospho-alpha-D-ribose 1-diphosphate. Its pathway is pyrimidine metabolism; UMP biosynthesis via de novo pathway; UMP from orotate: step 1/2. In terms of biological role, catalyzes the transfer of a ribosyl phosphate group from 5-phosphoribose 1-diphosphate to orotate, leading to the formation of orotidine monophosphate (OMP). This Sphingopyxis alaskensis (strain DSM 13593 / LMG 18877 / RB2256) (Sphingomonas alaskensis) protein is Orotate phosphoribosyltransferase.